A 302-amino-acid polypeptide reads, in one-letter code: Spermidine synthase (302 aa).

Met1 bears the N-acetylmethionine mark. The PABS domain maps to 18-253 (EGWFRETCSL…GQIGFMLCSK (236 aa)). Gln49 is an S-adenosyl 3-(methylsulfanyl)propylamine binding site. A putrescine-binding site is contributed by Tyr79. S-adenosyl 3-(methylsulfanyl)propylamine is bound by residues Gln80, Asp104, Glu124, 155 to 156 (DG), and Asp173. The active-site Proton acceptor is the Asp173. Putrescine contacts are provided by residues 173 to 176 (DSSD) and Tyr241.

It belongs to the spermidine/spermine synthase family. Homodimer or homotetramer.

The enzyme catalyses S-adenosyl 3-(methylsulfanyl)propylamine + putrescine = S-methyl-5'-thioadenosine + spermidine + H(+). Its pathway is amine and polyamine biosynthesis; spermidine biosynthesis; spermidine from putrescine: step 1/1. The activity is thought to be regulated mainly by the availability of decarboxylated S-adenosylmethionine. Functionally, catalyzes the production of spermidine from putrescine and decarboxylated S-adenosylmethionine (dcSAM). Has a strong preference for putrescine as substrate, and has very low activity towards 1,3-diaminopropane. Has extremely low activity towards spermidine. This Mus musculus (Mouse) protein is Spermidine synthase (Srm).